Here is a 265-residue protein sequence, read N- to C-terminus: Methyl-coenzyme M reductase II subunit gamma (265 aa).

A coenzyme M-binding site is contributed by R123.

The protein belongs to the methyl-coenzyme M reductase gamma subunit family. As to quaternary structure, MCR is a hexamer of two alpha, two beta, and two gamma chains, forming a dimer of heterotrimers. Requires coenzyme F430 as cofactor.

It catalyses the reaction coenzyme B + methyl-coenzyme M = methane + coenzyme M-coenzyme B heterodisulfide. It functions in the pathway one-carbon metabolism; methyl-coenzyme M reduction; methane from methyl-coenzyme M: step 1/1. In terms of biological role, component of the methyl-coenzyme M reductase (MCR) I that catalyzes the reductive cleavage of methyl-coenzyme M (CoM-S-CH3 or 2-(methylthio)ethanesulfonate) using coenzyme B (CoB or 7-mercaptoheptanoylthreonine phosphate) as reductant which results in the production of methane and the mixed heterodisulfide of CoB and CoM (CoM-S-S-CoB). This is the final step in methanogenesis. This Methanothermobacter thermautotrophicus (strain ATCC 29096 / DSM 1053 / JCM 10044 / NBRC 100330 / Delta H) (Methanobacterium thermoautotrophicum) protein is Methyl-coenzyme M reductase II subunit gamma (mrtG).